Consider the following 66-residue polypeptide: UPF0434 protein RPC_0266 (66 aa).

It belongs to the UPF0434 family.

This chain is UPF0434 protein RPC_0266, found in Rhodopseudomonas palustris (strain BisB18).